Reading from the N-terminus, the 525-residue chain is GMP synthase [glutamine-hydrolyzing] (525 aa).

The region spanning 9–207 is the Glutamine amidotransferase type-1 domain; sequence RILILDFGSQ…VLDICGCAAL (199 aa). The active-site Nucleophile is Cys-86. Active-site residues include His-181 and Glu-183. The 193-residue stretch at 208–400 folds into the GMPS ATP-PPase domain; it reads WTPSNIVDDA…LGLPYDMVYR (193 aa). 235–241 is a binding site for ATP; that stretch reads SGGVDSS.

As to quaternary structure, homodimer.

It carries out the reaction XMP + L-glutamine + ATP + H2O = GMP + L-glutamate + AMP + diphosphate + 2 H(+). The protein operates within purine metabolism; GMP biosynthesis; GMP from XMP (L-Gln route): step 1/1. In terms of biological role, catalyzes the synthesis of GMP from XMP. In Pseudomonas aeruginosa (strain LESB58), this protein is GMP synthase [glutamine-hydrolyzing].